The sequence spans 1333 residues: Protein CLASP-1 (1333 aa).

An HEAT 1 repeat occupies leucine 168–isoleucine 206. Residues serine 269–alanine 305 show a composition bias toward low complexity. Positions serine 269–aspartate 311 are disordered. Residues serine 360–leucine 389 adopt a coiled-coil conformation. Disordered stretches follow at residues glutamine 579–proline 711 and threonine 764–asparagine 792. A compositionally biased stretch (low complexity) spans asparagine 601–asparagine 611. Residues isoleucine 612–arginine 644 show a composition bias toward polar residues. Low complexity-rich tracts occupy residues serine 657 to serine 669 and threonine 686 to threonine 707. The stretch at valine 1266–histidine 1304 is one HEAT 2 repeat.

The protein belongs to the CLASP family.

It localises to the cytoplasm. It is found in the cytoskeleton. Functionally, microtubule plus-end tracking protein that promotes the stabilization of dynamic microtubules. This Caenorhabditis briggsae protein is Protein CLASP-1.